The chain runs to 1171 residues: DNA-directed RNA polymerase subunit beta' (1171 aa).

C60, C62, C75, and C78 together coordinate Zn(2+). Residues G299–M319 are disordered. Positions 449, 451, and 453 each coordinate Mg(2+). 4 residues coordinate Zn(2+): C790, C864, C871, and C874.

It belongs to the RNA polymerase beta' chain family. The RNAP catalytic core consists of 2 alpha, 1 beta, 1 beta' and 1 omega subunit. When a sigma factor is associated with the core the holoenzyme is formed, which can initiate transcription. Mg(2+) serves as cofactor. The cofactor is Zn(2+).

It carries out the reaction RNA(n) + a ribonucleoside 5'-triphosphate = RNA(n+1) + diphosphate. In terms of biological role, DNA-dependent RNA polymerase catalyzes the transcription of DNA into RNA using the four ribonucleoside triphosphates as substrates. The protein is DNA-directed RNA polymerase subunit beta' of Alkaliphilus metalliredigens (strain QYMF).